Consider the following 288-residue polypeptide: CUF1-dependent copper transporter 1 (288 aa).

N18 is a glycosylation site (N-linked (GlcNAc...) asparagine). A helical membrane pass occupies residues 42-62 (MPSSAGATVGVCIGLFILAIF). 2 disordered regions span residues 106–125 (PVLFNRRSSTKKEKDVYNPL) and 154–180 (RESQEGSSAPSYAHSQQGQAQAQGSGV). The segment covering 158–167 (EGSSAPSYAH) has biased composition (polar residues). Residues 168–177 (SQQGQAQAQG) are compositionally biased toward low complexity. Residues 251–271 (LLMLVVMTFNIWWMISVVIGC) form a helical membrane-spanning segment.

This sequence belongs to the copper transporter (Ctr) (TC 1.A.56) family. SLC31A subfamily. Interacts with the copper acquisition factor BIM1.

The protein resides in the cell membrane. Functionally, high affinity copper transporter involved in Cu(+) import into the cell upon copper-limitating conditions. Functions with BIM1 and probably also FRE4 and FRE7, where FRE4 and FRE7 metalloreductases liberate the Cu(2+) bound to the BIM1 copper-binding site for subsequent import of Cu(+) into the cell by CTR1, via the reduction of BIM1-bound Cu(2+) to Cu(+) to reduce binding affinity for BIM1 but increase affinity for CTR1. The BIM1-CTR1 pathway for copper uptake plays a key role in colonization in the brain where copper amounts are low and thus in cryptococcal meningitis. The chain is CUF1-dependent copper transporter 1 from Cryptococcus neoformans var. grubii serotype A (strain H99 / ATCC 208821 / CBS 10515 / FGSC 9487) (Filobasidiella neoformans var. grubii).